Consider the following 454-residue polypeptide: Chromosomal replication initiator protein DnaA (454 aa).

A domain I, interacts with DnaA modulators region spans residues methionine 1–methionine 74. Residues methionine 74–leucine 116 form a domain II region. The interval glutamine 117–alanine 333 is domain III, AAA+ region. ATP-binding residues include glycine 161, glycine 163, lysine 164, and threonine 165. Positions threonine 334–histidine 454 are domain IV, binds dsDNA.

Belongs to the DnaA family. Oligomerizes as a right-handed, spiral filament on DNA at oriC.

It localises to the cytoplasm. Functionally, plays an essential role in the initiation and regulation of chromosomal replication. ATP-DnaA binds to the origin of replication (oriC) to initiate formation of the DNA replication initiation complex once per cell cycle. Binds the DnaA box (a 9 base pair repeat at the origin) and separates the double-stranded (ds)DNA. Forms a right-handed helical filament on oriC DNA; dsDNA binds to the exterior of the filament while single-stranded (ss)DNA is stabiized in the filament's interior. The ATP-DnaA-oriC complex binds and stabilizes one strand of the AT-rich DNA unwinding element (DUE), permitting loading of DNA polymerase. After initiation quickly degrades to an ADP-DnaA complex that is not apt for DNA replication. Binds acidic phospholipids. This chain is Chromosomal replication initiator protein DnaA, found in Lactobacillus johnsonii (strain CNCM I-12250 / La1 / NCC 533).